The primary structure comprises 292 residues: CCR4-NOT transcription complex subunit 8 (292 aa).

The a divalent metal cation site is built by Asp40, Glu42, Asp161, and Asp230.

The protein belongs to the CAF1 family. Component of the CCR4-NOT complex; distinct complexes seem to exist that differ in the participation of probably mutually exclusive catalytic subunits; the complex contains two deadenylase subunits, CNOT6 or CNOT6L, and CNOT7 or CNOT8. In the complex interacts directly with CNOT1. Interacts with BTG1, BTG2 and TOB1. Interacts with BTG4.

The protein localises to the cytoplasm. Its subcellular location is the nucleus. The enzyme catalyses Exonucleolytic cleavage of poly(A) to 5'-AMP.. In terms of biological role, has 3'-5' poly(A) exoribonuclease activity for synthetic poly(A) RNA substrate. Its function seems to be partially redundant with that of CNOT7. Catalytic component of the CCR4-NOT complex which is linked to various cellular processes including bulk mRNA degradation, miRNA-mediated repression, translational repression during translational initiation and general transcription regulation. During miRNA-mediated repression the complex also seems to act as translational repressor during translational initiation. Additional complex functions may be a consequence of its influence on mRNA expression. Associates with members of the BTG family such as TOB1 and BTG2 and is required for their anti-proliferative activity. This chain is CCR4-NOT transcription complex subunit 8 (CNOT8), found in Homo sapiens (Human).